The primary structure comprises 809 residues: MSSLPVAAVLPELLTALDCAPQVLLSAPTGAGKSTWLPLQLLAHPGINGKIILLEPRRLAARNVAQRLAELLNEKPGDTVGYRMRAQNCVGPNTRLEVVTEGVLTRMIQRDPELSGVGLVILDEFHERSLQADLALALLLDVQQGLRDDLKLLIMSATLDNDRLQQMLPEAPVVISEGRSFPVERRYLPLPAHQRFDDAVAVATAEMLRQESGSLLLFLPGVGEIQRVQEQLASRIGSDVLLCPLYGALSLNDQRKAILPAPQGMRKVVLATNIAETSLTIEGIRLVVDCAQERVARFDPRTGLTRLITQRVSQASMTQRAGRAGRLEPGISLHLIAKEQAERAAAQSEPEILQSDLSGLLMELLQWGCSDPAQMSWLDQPPVVNLLAAKRLLQMLGALEGERLSAQGQKMAALGNDPRLAAMLVSAKNDDEAATAAKIAAILEEPPRMGNSDLGVAFSRNQPAWQQRSQQLLKRLNVRGGEADSSLIAPLLAGAFADRIARRRGQDGRYQLANGMGAMLDANDALSRHEWLIAPLLLQGSASPDARILLALLVDIDELVQRCPQLVQQSDTVEWDDAQGTLKAWRRLQIGQLTVKVQPLAKPSEDELHQAMLNGIRDKGLSVLNWTAEAEQLRLRLLCAAKWLPEYDWPAVDDESLLAALETWLLPHMTGVHSLRGLKSLDIYQALRGLLDWGMQQRLDSELPAHYTVPTGSRIAIRYHEDNPPALAVRMQEMFGEATNPTIAQGRVPLVLELLSPAQRPLQITRDLSDFWKGAYREVQKEMKGRYPKHVWPDDPANTAPTRRTKKYS.

Positions 14–177 constitute a Helicase ATP-binding domain; sequence LTALDCAPQV…LPEAPVVISE (164 aa). 27–34 lines the ATP pocket; that stretch reads APTGAGKS. The short motif at 123-126 is the DEFH box element; it reads DEFH. In terms of domain architecture, Helicase C-terminal spans 195–368; the sequence is RFDDAVAVAT…GLLMELLQWG (174 aa). The tract at residues 788–809 is disordered; the sequence is PKHVWPDDPANTAPTRRTKKYS.

It belongs to the DEAD box helicase family.

The enzyme catalyses ATP + H2O = ADP + phosphate + H(+). The protein is ATP-dependent RNA helicase HrpB (hrpB) of Escherichia coli (strain K12).